The primary structure comprises 100 residues: uncharacterized protein (100 aa).

Residues 8–100 (MKQSDDQIRA…TYLPGFLETL (93 aa)) enclose the HTH arsR-type domain. Positions 44 to 67 (CGEVGEKCNIVKTTASYHFKTLRE) form a DNA-binding region, H-T-H motif.

This is an uncharacterized protein from Bacillus subtilis (strain 168).